The sequence spans 389 residues: Mannitol-1-phosphate 5-dehydrogenase (389 aa).

7–18 (AVHFGGGNIGRG) contacts NAD(+). K216 is an active-site residue.

The protein belongs to the mannitol dehydrogenase family. In terms of assembly, monomer.

The catalysed reaction is D-mannitol 1-phosphate + NAD(+) = beta-D-fructose 6-phosphate + NADH + H(+). Catalyzes the NAD(H)-dependent interconversion of D-fructose 6-phosphate and D-mannitol 1-phosphate in the mannitol metabolic pathway. The chain is Mannitol-1-phosphate 5-dehydrogenase from Pyrenophora tritici-repentis (strain Pt-1C-BFP) (Wheat tan spot fungus).